Here is an 873-residue protein sequence, read N- to C-terminus: Protein translocase subunit SecA (873 aa).

ATP-binding positions include Gln-88, Gly-106–Thr-110, and Asp-501. Residues Cys-856, Cys-858, Cys-867, and His-868 each contribute to the Zn(2+) site.

Belongs to the SecA family. In terms of assembly, monomer and homodimer. Part of the essential Sec protein translocation apparatus which comprises SecA, SecYEG and auxiliary proteins SecDF-YajC and YidC. Zn(2+) serves as cofactor.

Its subcellular location is the cell inner membrane. The protein resides in the cytoplasm. It catalyses the reaction ATP + H2O + cellular proteinSide 1 = ADP + phosphate + cellular proteinSide 2.. Functionally, part of the Sec protein translocase complex. Interacts with the SecYEG preprotein conducting channel. Has a central role in coupling the hydrolysis of ATP to the transfer of proteins into and across the cell membrane, serving both as a receptor for the preprotein-SecB complex and as an ATP-driven molecular motor driving the stepwise translocation of polypeptide chains across the membrane. This is Protein translocase subunit SecA from Anaplasma phagocytophilum (strain HZ).